A 275-amino-acid polypeptide reads, in one-letter code: Taurine transport system permease protein TauC (275 aa).

The next 7 helical transmembrane spans lie at 20 to 42 (LSRQ…WTVA), 87 to 107 (IMLA…AMGL), 124 to 144 (PVPP…GETS), 146 to 166 (ILLI…AGVK), 186 to 206 (VLWF…LRIG), 209 to 229 (VGWS…LGFM), and 236 to 256 (FLAT…AFLL). The region spanning 80–264 (LAASLTRIML…LLELGLRALQ (185 aa)) is the ABC transmembrane type-1 domain.

This sequence belongs to the binding-protein-dependent transport system permease family. CysTW subfamily.

The protein localises to the cell inner membrane. In terms of biological role, part of a binding-protein-dependent transport system for taurine. Probably responsible for the translocation of the substrate across the membrane. In Escherichia coli (strain K12), this protein is Taurine transport system permease protein TauC (tauC).